The primary structure comprises 111 residues: UPF0060 membrane protein XAC3064 (111 aa).

A run of 4 helical transmembrane segments spans residues 8–28 (LLLF…PYLW), 32–52 (GGSV…VWLL), 64–84 (AAYG…VDGV), and 91–111 (LLGA…PRSA).

This sequence belongs to the UPF0060 family.

The protein resides in the cell inner membrane. This Xanthomonas axonopodis pv. citri (strain 306) protein is UPF0060 membrane protein XAC3064.